The primary structure comprises 310 residues: Olfactory receptor 5T7 (310 aa).

The Extracellular portion of the chain corresponds to Met1–Ile23. An N-linked (GlcNAc...) asparagine glycan is attached at Asn3. A helical transmembrane segment spans residues Leu24–Ile44. Topologically, residues Thr45–Arg52 are cytoplasmic. Residues Leu53–Thr73 form a helical membrane-spanning segment. The Extracellular portion of the chain corresponds to Val74 to Thr97. Cys95 and Cys187 are oxidised to a cystine. A helical membrane pass occupies residues Gln98–Tyr118. Residues Asp119 to Val131 are Cytoplasmic-facing. Residues Val132 to Leu152 form a helical membrane-spanning segment. At His153–Gln194 the chain is on the extracellular side. A helical transmembrane segment spans residues Leu195–Ser215. Topologically, residues Tyr216 to Val235 are cytoplasmic. Residues Phe236–Met256 form a helical membrane-spanning segment. Topologically, residues Tyr257 to Asp269 are extracellular. A helical membrane pass occupies residues Met270–Leu290. Topologically, residues Arg291 to Gly310 are cytoplasmic.

The protein belongs to the G-protein coupled receptor 1 family.

It is found in the cell membrane. In terms of biological role, potential odorant receptor. In Mus musculus (Mouse), this protein is Olfactory receptor 5T7.